The primary structure comprises 335 residues: Transmembrane protein 120B-B (335 aa).

Residues 1 to 39 (MSLQKCQEEWGELEKEFQQLQETHKVYKQKLEELSSLQN) are a coiled coil. 6 consecutive transmembrane segments (helical) span residues 100 to 116 (SLYLNLVLGNVNVTLLS), 130 to 150 (FKLYLTIILLLGAITCRFVLH), 157 to 177 (VFNFLLVWYFCTLTIRESILI), 193 to 213 (VSTFLSGVMLTWPDGLMYQMF), 268 to 288 (FLLPVLFFGHFWQLYNAMTLF), and 300 to 320 (QVFVLALTFLLLFLGNFLTTL).

It belongs to the TMEM120 family.

It localises to the nucleus inner membrane. Necessary for efficient adipogenesis. Does not show ion channel activity. In Xenopus laevis (African clawed frog), this protein is Transmembrane protein 120B-B (tmem120b-b).